Here is a 411-residue protein sequence, read N- to C-terminus: Dipeptidase 1 (411 aa).

The signal sequence occupies residues 1 to 16; sequence MWSGWWLWPLVAVCTA. Residues histidine 36 and aspartate 38 each contribute to the Zn(2+) site. N-linked (GlcNAc...) asparagine glycosylation occurs at asparagine 57. An intrachain disulfide couples cysteine 87 to cysteine 170. Zn(2+) is bound at residue glutamate 141. Histidine 168 is a binding site for substrate. Zn(2+) contacts are provided by histidine 214 and histidine 235. Cysteine 242 and cysteine 274 are joined by a disulfide. Arginine 246 is a substrate binding site. The N-linked (GlcNAc...) asparagine glycan is linked to asparagine 279. Aspartate 304 is a binding site for substrate. 2 N-linked (GlcNAc...) asparagine glycosylation sites follow: asparagine 332 and asparagine 358. Serine 385 is lipidated: GPI-anchor amidated serine. Positions 386–411 are cleaved as a propeptide — removed in mature form; that stretch reads GASSLHRHWGLLLASLAPLVLCLSLL.

Belongs to the metallo-dependent hydrolases superfamily. Peptidase M19 family. As to quaternary structure, homodimer; disulfide-linked. Zn(2+) is required as a cofactor. In terms of tissue distribution, expressed in lung and kidneys.

The protein localises to the apical cell membrane. It is found in the cell projection. It localises to the microvillus membrane. It carries out the reaction an L-aminoacyl-L-amino acid + H2O = 2 an L-alpha-amino acid. It catalyses the reaction leukotriene D4 + H2O = leukotriene E4 + glycine. The enzyme catalyses a beta-lactam + H2O = a substituted beta-amino acid. The catalysed reaction is L-cystine-bis-glycine + 2 H2O = L-cystine + 2 glycine. It carries out the reaction glycyldehydrophenylalanine + H2O = 2,3-didehydrophenylalanine + glycine. Inhibited by L-penicillamine. Beta-lactamase activity is inhibited by cilastatin. Hydrolyzes a wide range of dipeptides including the conversion of leukotriene D4 to leukotriene E4. Hydrolyzes cystinyl-bis-glycine (cys-bis-gly) formed during glutathione degradation. Also possesses beta lactamase activity and can hydrolyze the beta-lactam antibiotic imipenem. In terms of biological role, independently of its dipeptidase activity, acts as an adhesion receptor for neutrophil recruitment from bloodstream into inflamed lungs and liver. In Homo sapiens (Human), this protein is Dipeptidase 1 (DPEP1).